The following is a 347-amino-acid chain: Phosphoribosylformylglycinamidine cyclo-ligase (347 aa).

The protein belongs to the AIR synthase family.

Its subcellular location is the cytoplasm. The catalysed reaction is 2-formamido-N(1)-(5-O-phospho-beta-D-ribosyl)acetamidine + ATP = 5-amino-1-(5-phospho-beta-D-ribosyl)imidazole + ADP + phosphate + H(+). Its pathway is purine metabolism; IMP biosynthesis via de novo pathway; 5-amino-1-(5-phospho-D-ribosyl)imidazole from N(2)-formyl-N(1)-(5-phospho-D-ribosyl)glycinamide: step 2/2. This is Phosphoribosylformylglycinamidine cyclo-ligase from Bacillus cytotoxicus (strain DSM 22905 / CIP 110041 / 391-98 / NVH 391-98).